Reading from the N-terminus, the 519-residue chain is Maltose/maltodextrin transport system permease protein MalF (519 aa).

The Cytoplasmic portion of the chain corresponds to 1-18 (MRKNPMDVIKKKHWWQSD). The helical transmembrane segment at 19 to 41 (ALKWSVLGLLGLLVGYLVVLMYA) threads the bilayer. Over 42–44 (QGE) the chain is Periplasmic. Residues 45–62 (YLFAITTLILSSAGLYIF) form a helical membrane-spanning segment. Topologically, residues 63-74 (ANRKAYAWRYVY) are cytoplasmic. Residues 75–97 (PGMAGMGLFVLFPLVCTIAIAFT) traverse the membrane as a helical segment. The Periplasmic portion of the chain corresponds to 98–288 (NYSSTNQLTF…QKPFLAIFVW (191 aa)). The ABC transmembrane type-1 domain maps to 286–510 (FVWTVVFSLI…LLVGALAIVN (225 aa)). A helical transmembrane segment spans residues 289-311 (TVVFSLITVFLTVAVGMVLACLV). Topologically, residues 312–323 (QWEALRGKAVYR) are cytoplasmic. A helical transmembrane segment spans residues 324-346 (VLLILPYAVPSFISILIFKGLFN). Topologically, residues 347–374 (QSFGEINMMLSALFGVKPAWFSDPTTAR) are periplasmic. Residues 375-397 (TMLIIVNTWLGYPYMMILCMGLL) traverse the membrane as a helical segment. The Cytoplasmic portion of the chain corresponds to 398–417 (KAIPDDLYEASAMDGAGPFQ). The chain crosses the membrane as a helical span at residues 418 to 440 (NFFKITLPLLIKPLTPLMIASFA). At 441–488 (FNFNNFVLIQLLTNGGPDRLGTTTPAGYTDLLVNYTYRIAFEGGGGQD) the chain is on the periplasmic side. Residues 489-511 (FGLAAAIATLIFLLVGALAIVNL) traverse the membrane as a helical segment. The Cytoplasmic segment spans residues 512–519 (KATRMKFD).

This sequence belongs to the binding-protein-dependent transport system permease family. MalFG subfamily. The complex is composed of two ATP-binding proteins (MalK), two transmembrane proteins (MalG and MalF) and a solute-binding protein (MalE).

It localises to the cell inner membrane. Part of the ABC transporter complex MalEFGK involved in maltose/maltodextrin import. Probably responsible for the translocation of the substrate across the membrane. The polypeptide is Maltose/maltodextrin transport system permease protein MalF (malF) (Escherichia coli O6:H1 (strain CFT073 / ATCC 700928 / UPEC)).